A 429-amino-acid polypeptide reads, in one-letter code: Queuine tRNA-ribosyltransferase accessory subunit 2 (429 aa).

Positions 330, 332, 335, and 361 each coordinate Zn(2+).

Belongs to the queuine tRNA-ribosyltransferase family. QTRT2 subfamily. In terms of assembly, heterodimer of a catalytic subunit and an accessory subunit. The cofactor is Zn(2+).

The protein localises to the cytoplasm. Its function is as follows. Non-catalytic subunit of the queuine tRNA-ribosyltransferase (TGT) that catalyzes the base-exchange of a guanine (G) residue with queuine (Q) at position 34 (anticodon wobble position) in tRNAs with GU(N) anticodons (tRNA-Asp, -Asn, -His and -Tyr), resulting in the hypermodified nucleoside queuosine (7-(((4,5-cis-dihydroxy-2-cyclopenten-1-yl)amino)methyl)-7-deazaguanosine). This chain is Queuine tRNA-ribosyltransferase accessory subunit 2, found in Culex quinquefasciatus (Southern house mosquito).